A 304-amino-acid polypeptide reads, in one-letter code: Pyridoxal 5'-phosphate synthase subunit pyroA (304 aa).

Aspartate 28 contributes to the D-ribose 5-phosphate binding site. Residue lysine 85 is the Schiff-base intermediate with D-ribose 5-phosphate of the active site. Glycine 157 is a D-ribose 5-phosphate binding site. Position 169 (arginine 169) interacts with D-glyceraldehyde 3-phosphate. Residues glycine 224 and 245-246 (GS) contribute to the D-ribose 5-phosphate site.

Belongs to the PdxS/SNZ family.

It catalyses the reaction aldehydo-D-ribose 5-phosphate + D-glyceraldehyde 3-phosphate + L-glutamine = pyridoxal 5'-phosphate + L-glutamate + phosphate + 3 H2O + H(+). Its pathway is cofactor biosynthesis; pyridoxal 5'-phosphate biosynthesis. Catalyzes the formation of pyridoxal 5'-phosphate from ribose 5-phosphate (RBP), glyceraldehyde 3-phosphate (G3P) and ammonia. The ammonia is provided by PDX2. Can also use ribulose 5-phosphate and dihydroxyacetone phosphate as substrates, resulting from enzyme-catalyzed isomerization of RBP and G3P, respectively. Also plays an indirect role in resistance to singlet oxygen-generating photosensitizers. This Emericella nidulans (strain FGSC A4 / ATCC 38163 / CBS 112.46 / NRRL 194 / M139) (Aspergillus nidulans) protein is Pyridoxal 5'-phosphate synthase subunit pyroA (pyroA).